A 658-amino-acid polypeptide reads, in one-letter code: Integrator complex subunit 9 (658 aa).

Residue lysine 58 forms a Glycyl lysine isopeptide (Lys-Gly) (interchain with G-Cter in SUMO2) linkage. Residues 548-573 (DNKHVLQPPPRPTQPTGGKKRKRASD) are disordered. The Nuclear localization signal signature appears at 566–570 (KKRKR).

The protein belongs to the metallo-beta-lactamase superfamily. RNA-metabolizing metallo-beta-lactamase-like family. INTS9 subfamily. As to quaternary structure, component of the Integrator complex, composed of core subunits INTS1, INTS2, INTS3, INTS4, INTS5, INTS6, INTS7, INTS8, INTS9/RC74, INTS10, INTS11/CPSF3L, INTS12, INTS13, INTS14 and INTS15. The core complex associates with protein phosphatase 2A subunits PPP2CA and PPP2R1A, to form the Integrator-PP2A (INTAC) complex. INTS9 is part of the RNA endonuclease subcomplex, composed of INTS4, INTS9, INTS11 and inositol hexakisphosphate (InsP6). Interacts with WDR73; interaction is required for the assembly of the RNA endonuclease subcomplex in the cytoplasm. Interacts with BRAT1; interaction is required for the assembly of the RNA endonuclease subcomplex. Interacts with ESRRB, ESRRB is not a core component of the Integrator complex and this association is a bridge for the interaction with the multiprotein complex Integrator; attracts the transcriptional machinery.

The protein localises to the nucleus. It localises to the cytoplasm. Functionally, component of the integrator complex, a multiprotein complex that terminates RNA polymerase II (Pol II) transcription in the promoter-proximal region of genes. The integrator complex provides a quality checkpoint during transcription elongation by driving premature transcription termination of transcripts that are unfavorably configured for transcriptional elongation: the complex terminates transcription by (1) catalyzing dephosphorylation of the C-terminal domain (CTD) of Pol II subunit POLR2A/RPB1 and SUPT5H/SPT5, (2) degrading the exiting nascent RNA transcript via endonuclease activity and (3) promoting the release of Pol II from bound DNA. The integrator complex is also involved in terminating the synthesis of non-coding Pol II transcripts, such as enhancer RNAs (eRNAs), small nuclear RNAs (snRNAs), telomerase RNAs and long non-coding RNAs (lncRNAs). Mediates recruitment of cytoplasmic dynein to the nuclear envelope, probably as component of the integrator complex. The polypeptide is Integrator complex subunit 9 (INTS9) (Bos taurus (Bovine)).